We begin with the raw amino-acid sequence, 237 residues long: Proteasome subunit beta type-1-B (237 aa).

This sequence belongs to the peptidase T1B family. As to quaternary structure, the 26S proteasome consists of a 20S proteasome core and two 19S regulatory subunits. The 20S proteasome core is composed of 28 subunits that are arranged in four stacked rings, resulting in a barrel-shaped structure. The two end rings are each formed by seven alpha subunits, and the two central rings are each formed by seven beta subunits. The catalytic chamber with the active sites is on the inside of the barrel.

The protein resides in the cytoplasm. It is found in the nucleus. In terms of biological role, non-catalytic component of the proteasome, a multicatalytic proteinase complex which is characterized by its ability to cleave peptides with Arg, Phe, Tyr, Leu, and Glu adjacent to the leaving group at neutral or slightly basic pH. The proteasome has an ATP-dependent proteolytic activity. In Carassius auratus (Goldfish), this protein is Proteasome subunit beta type-1-B (psmb1-B).